Consider the following 505-residue polypeptide: ATP synthase subunit alpha (505 aa).

171–178 (GDRQTGKT) contributes to the ATP binding site.

Belongs to the ATPase alpha/beta chains family. F-type ATPases have 2 components, CF(1) - the catalytic core - and CF(0) - the membrane proton channel. CF(1) has five subunits: alpha(3), beta(3), gamma(1), delta(1), epsilon(1). CF(0) has three main subunits: a(1), b(2) and c(9-12). The alpha and beta chains form an alternating ring which encloses part of the gamma chain. CF(1) is attached to CF(0) by a central stalk formed by the gamma and epsilon chains, while a peripheral stalk is formed by the delta and b chains.

The protein resides in the cell inner membrane. It carries out the reaction ATP + H2O + 4 H(+)(in) = ADP + phosphate + 5 H(+)(out). In terms of biological role, produces ATP from ADP in the presence of a proton gradient across the membrane. The alpha chain is a regulatory subunit. This is ATP synthase subunit alpha from Campylobacter fetus subsp. fetus (strain 82-40).